The sequence spans 90 residues: UPF0297 protein BH1268 (90 aa).

This sequence belongs to the UPF0297 family.

In Halalkalibacterium halodurans (strain ATCC BAA-125 / DSM 18197 / FERM 7344 / JCM 9153 / C-125) (Bacillus halodurans), this protein is UPF0297 protein BH1268.